A 152-amino-acid polypeptide reads, in one-letter code: Deoxyuridine 5'-triphosphate nucleotidohydrolase (152 aa).

Substrate is bound by residues 71–73, Asn-84, 88–90, and Met-98; these read RSG and LID.

It belongs to the dUTPase family. In terms of assembly, homotrimer. Mg(2+) is required as a cofactor.

The catalysed reaction is dUTP + H2O = dUMP + diphosphate + H(+). Its pathway is pyrimidine metabolism; dUMP biosynthesis; dUMP from dCTP (dUTP route): step 2/2. This enzyme is involved in nucleotide metabolism: it produces dUMP, the immediate precursor of thymidine nucleotides and it decreases the intracellular concentration of dUTP so that uracil cannot be incorporated into DNA. This chain is Deoxyuridine 5'-triphosphate nucleotidohydrolase, found in Escherichia coli O157:H7.